The chain runs to 458 residues: Exodeoxyribonuclease 7 large subunit (458 aa).

It belongs to the XseA family. In terms of assembly, heterooligomer composed of large and small subunits.

The protein resides in the cytoplasm. It catalyses the reaction Exonucleolytic cleavage in either 5'- to 3'- or 3'- to 5'-direction to yield nucleoside 5'-phosphates.. In terms of biological role, bidirectionally degrades single-stranded DNA into large acid-insoluble oligonucleotides, which are then degraded further into small acid-soluble oligonucleotides. The chain is Exodeoxyribonuclease 7 large subunit from Escherichia coli O17:K52:H18 (strain UMN026 / ExPEC).